Reading from the N-terminus, the 825-residue chain is MENTLGEGSTVNASVDVDQHGNDNNSDSNANAAVAGVANTDTAGEESQQQDESLKDEATVPNTRDAESEAITVTAKQQPTMQANKLDSQETPSTEESRAQNVFGQDNEDSDNLFGETESSVSNNEANTPSIPTNPVDNENNKPAIKEDSTIQDSNGDVKNMEDVKIQKEEEPENNTVIEGVKEESQPDENTKEMDEVEEDDEDDDQPMISPDNSIFGDTKSESKQLGNTSSVANTPSEIPDAHKAEQEDIIEKTESVDKKVDSGEERNEQEREIMNDHSKSANPKKTTITRVEPETFEIPQAHEIVIPSYSKWFNLEKIHSIEVQSLPEFFTNRIPSKTPEVYMRYRNFMVNSYRLNPNEYFSVTTARRNVSGDAAALFRLHKFLTKWGLINYQVDSKLLPKNIEPPLTSQYSTRHDAPRGLFPFESYKPSVQLPDMAKLKKMMNTSDSESTLYKYLKESKRKYDEITHPPSTTDDENGDKNDNGGKMNNEVSTSTSMTGDANLLEEGETSRPLKKVKILEQIDENWSKEDLQKLLKGIQEFGADWYKVAKNVGNKSPEQCILRFLQLPIEDKFLYGDGNGKGDNDNGLGPLKYAPHLPFSKSENPVLSTIAFLVGLVNPKTVQSMTQRAIQSAESIKSQKEEISDQKPIEHIKEGSEIAISSLGYRSHIFATNEERQMNFLTNELIRLQMEKLDAKLNHLKKLEKFMELERKTLERQQENLLIQRLNFNQNSSKIVNVLSKCLNLISDSNINNSSVAEKEEIRSQIDHFKSMLSKPETLSIGKNPFNKPNIETGENHNGQSISNENDVKPISIEAPQFYRYWSA.

Over residues 1–13 (MENTLGEGSTVNA) the composition is skewed to polar residues. The tract at residues 1 to 285 (MENTLGEGST…NDHSKSANPK (285 aa)) is disordered. Positions 22 to 42 (NDNNSDSNANAAVAGVANTDT) are enriched in low complexity. Composition is skewed to polar residues over residues 74–104 (TAKQQPTMQANKLDSQETPSTEESRAQNVFG) and 117–138 (TESSVSNNEANTPSIPTNPVDN). At Ser-88 the chain carries Phosphoserine. Basic and acidic residues-rich tracts occupy residues 159–169 (KNMEDVKIQKE) and 180–194 (GVKEESQPDENTKEM). A Phosphoserine modification is found at Ser-185. Over residues 195-206 (DEVEEDDEDDDQ) the composition is skewed to acidic residues. The segment covering 224-237 (KQLGNTSSVANTPS) has biased composition (polar residues). Thr-235 carries the phosphothreonine modification. Positions 240–280 (PDAHKAEQEDIIEKTESVDKKVDSGEERNEQEREIMNDHSK) are enriched in basic and acidic residues. In terms of domain architecture, SWIRM spans 305–402 (IVIPSYSKWF…YQVDSKLLPK (98 aa)). The tract at residues 464 to 509 (YDEITHPPSTTDDENGDKNDNGGKMNNEVSTSTSMTGDANLLEEGE) is disordered. The SANT domain occupies 522–573 (QIDENWSKEDLQKLLKGIQEFGADWYKVAKNVGNKSPEQCILRFLQLPIEDK). At Ser-657 the chain carries Phosphoserine. The interval 694–722 (LDAKLNHLKKLEKFMELERKTLERQQENL) is leucine-zipper.

In terms of assembly, interacts with RTT102, SWP82 and the N-terminus of SNF2. Component of the SWI/SNF global transcription activator complex. The 1.14 MDa SWI/SNF complex is composed of 11 different subunits: one copy each of SWI1, SNF2/SWI2, SNF5, SNF12/SWP73, ARP7/SWP61, ARP9/SWP59; two copies each of SWI3, SNF6, SNF11, SWP82; and three copies of TAF14/SWP29.

The protein resides in the nucleus. Involved in transcriptional activation. Component of the SWI/SNF complex, an ATP-dependent chromatin-remodeling complex, which is required for the positive and negative regulation of gene expression of a large number of genes. It changes chromatin structure by altering DNA-histone contacts within a nucleosome, leading eventually to a change in nucleosome position, thus facilitating or repressing binding of gene-specific transcription factors. This Saccharomyces cerevisiae (strain ATCC 204508 / S288c) (Baker's yeast) protein is SWI/SNF complex subunit SWI3 (SWI3).